A 380-amino-acid chain; its full sequence is Succinate--CoA ligase [ADP-forming] subunit beta (380 aa).

The ATP-grasp domain maps to 9 to 236; sequence KGVFADAGIP…EAAGDELEAK (228 aa). ATP-binding positions include K45, 52 to 54, E91, V94, and E99; that span reads GRG. Mg(2+) is bound by residues N191 and D205. Residues N256 and 313-315 each bind substrate; that span reads GIT.

It belongs to the succinate/malate CoA ligase beta subunit family. In terms of assembly, heterotetramer of two alpha and two beta subunits. The cofactor is Mg(2+).

The enzyme catalyses succinate + ATP + CoA = succinyl-CoA + ADP + phosphate. It carries out the reaction GTP + succinate + CoA = succinyl-CoA + GDP + phosphate. It participates in carbohydrate metabolism; tricarboxylic acid cycle; succinate from succinyl-CoA (ligase route): step 1/1. Succinyl-CoA synthetase functions in the citric acid cycle (TCA), coupling the hydrolysis of succinyl-CoA to the synthesis of either ATP or GTP and thus represents the only step of substrate-level phosphorylation in the TCA. The beta subunit provides nucleotide specificity of the enzyme and binds the substrate succinate, while the binding sites for coenzyme A and phosphate are found in the alpha subunit. In Natronomonas pharaonis (strain ATCC 35678 / DSM 2160 / CIP 103997 / JCM 8858 / NBRC 14720 / NCIMB 2260 / Gabara) (Halobacterium pharaonis), this protein is Succinate--CoA ligase [ADP-forming] subunit beta.